Consider the following 194-residue polypeptide: ATP synthase subunit delta (194 aa).

This sequence belongs to the ATPase delta chain family. F-type ATPases have 2 components, F(1) - the catalytic core - and F(0) - the membrane proton channel. F(1) has five subunits: alpha(3), beta(3), gamma(1), delta(1), epsilon(1). F(0) has three main subunits: a(1), b(2) and c(10-14). The alpha and beta chains form an alternating ring which encloses part of the gamma chain. F(1) is attached to F(0) by a central stalk formed by the gamma and epsilon chains, while a peripheral stalk is formed by the delta and b chains.

It localises to the cell inner membrane. In terms of biological role, f(1)F(0) ATP synthase produces ATP from ADP in the presence of a proton or sodium gradient. F-type ATPases consist of two structural domains, F(1) containing the extramembraneous catalytic core and F(0) containing the membrane proton channel, linked together by a central stalk and a peripheral stalk. During catalysis, ATP synthesis in the catalytic domain of F(1) is coupled via a rotary mechanism of the central stalk subunits to proton translocation. Its function is as follows. This protein is part of the stalk that links CF(0) to CF(1). It either transmits conformational changes from CF(0) to CF(1) or is implicated in proton conduction. The sequence is that of ATP synthase subunit delta from Bartonella bacilliformis (strain ATCC 35685 / KC583 / Herrer 020/F12,63).